A 350-amino-acid chain; its full sequence is Galactokinase (350 aa).

A substrate-binding site is contributed by 14-17 (EHTD). Residues serine 46 and 98–104 (GSGLSSS) contribute to the ATP site. Serine 104 and glutamate 136 together coordinate Mg(2+). The active-site Proton acceptor is the aspartate 148. Tyrosine 197 provides a ligand contact to substrate.

The protein belongs to the GHMP kinase family. GalK subfamily.

It localises to the cytoplasm. It carries out the reaction alpha-D-galactose + ATP = alpha-D-galactose 1-phosphate + ADP + H(+). It participates in carbohydrate metabolism; galactose metabolism. Its function is as follows. Catalyzes the transfer of the gamma-phosphate of ATP to D-galactose to form alpha-D-galactose-1-phosphate (Gal-1-P). This Thermococcus kodakarensis (strain ATCC BAA-918 / JCM 12380 / KOD1) (Pyrococcus kodakaraensis (strain KOD1)) protein is Galactokinase.